The chain runs to 43 residues: Holotricin-1 (43 aa).

3 disulfide bridges follow: Cys3–Cys34, Cys20–Cys39, and Cys24–Cys41.

The protein belongs to the invertebrate defensin family. Type 1 subfamily. In terms of tissue distribution, hemolymph.

Its subcellular location is the secreted. Shows potent antibacterial activity against Gram-positive bacteria. This chain is Holotricin-1, found in Holotrichia diomphalia (Korean black chafer).